The following is a 277-amino-acid chain: NADPH-dependent 7-cyano-7-deazaguanine reductase (277 aa).

Position 83–85 (83–85 (VES)) interacts with substrate. 85–86 (SK) is a binding site for NADPH. Cys-184 acts as the Thioimide intermediate in catalysis. Asp-191 serves as the catalytic Proton donor. 223–224 (HE) provides a ligand contact to substrate. An NADPH-binding site is contributed by 252–253 (RG).

The protein belongs to the GTP cyclohydrolase I family. QueF type 2 subfamily. As to quaternary structure, homodimer.

The protein resides in the cytoplasm. The enzyme catalyses 7-aminomethyl-7-carbaguanine + 2 NADP(+) = 7-cyano-7-deazaguanine + 2 NADPH + 3 H(+). It functions in the pathway tRNA modification; tRNA-queuosine biosynthesis. Functionally, catalyzes the NADPH-dependent reduction of 7-cyano-7-deazaguanine (preQ0) to 7-aminomethyl-7-deazaguanine (preQ1). The chain is NADPH-dependent 7-cyano-7-deazaguanine reductase from Cupriavidus taiwanensis (strain DSM 17343 / BCRC 17206 / CCUG 44338 / CIP 107171 / LMG 19424 / R1) (Ralstonia taiwanensis (strain LMG 19424)).